Here is a 415-residue protein sequence, read N- to C-terminus: Gamma-glutamyl phosphate reductase (415 aa).

Belongs to the gamma-glutamyl phosphate reductase family.

The protein resides in the cytoplasm. The catalysed reaction is L-glutamate 5-semialdehyde + phosphate + NADP(+) = L-glutamyl 5-phosphate + NADPH + H(+). The protein operates within amino-acid biosynthesis; L-proline biosynthesis; L-glutamate 5-semialdehyde from L-glutamate: step 2/2. Catalyzes the NADPH-dependent reduction of L-glutamate 5-phosphate into L-glutamate 5-semialdehyde and phosphate. The product spontaneously undergoes cyclization to form 1-pyrroline-5-carboxylate. The protein is Gamma-glutamyl phosphate reductase of Salmonella dublin (strain CT_02021853).